We begin with the raw amino-acid sequence, 222 residues long: Nucleoside triphosphate pyrophosphatase (222 aa).

The active-site Proton acceptor is aspartate 82.

The protein belongs to the Maf family. It depends on a divalent metal cation as a cofactor.

The protein resides in the cytoplasm. It carries out the reaction a ribonucleoside 5'-triphosphate + H2O = a ribonucleoside 5'-phosphate + diphosphate + H(+). It catalyses the reaction a 2'-deoxyribonucleoside 5'-triphosphate + H2O = a 2'-deoxyribonucleoside 5'-phosphate + diphosphate + H(+). In terms of biological role, nucleoside triphosphate pyrophosphatase. May have a dual role in cell division arrest and in preventing the incorporation of modified nucleotides into cellular nucleic acids. This is Nucleoside triphosphate pyrophosphatase from Mycobacterium bovis (strain ATCC BAA-935 / AF2122/97).